Here is a 496-residue protein sequence, read N- to C-terminus: Lysine--tRNA ligase (496 aa).

The Mg(2+) site is built by Glu-409 and Glu-416.

It belongs to the class-II aminoacyl-tRNA synthetase family. In terms of assembly, homodimer. Requires Mg(2+) as cofactor.

The protein resides in the cytoplasm. The catalysed reaction is tRNA(Lys) + L-lysine + ATP = L-lysyl-tRNA(Lys) + AMP + diphosphate. This is Lysine--tRNA ligase from Streptococcus pneumoniae serotype 4 (strain ATCC BAA-334 / TIGR4).